A 298-amino-acid polypeptide reads, in one-letter code: ATP synthase gamma chain (298 aa).

Belongs to the ATPase gamma chain family. F-type ATPases have 2 components, CF(1) - the catalytic core - and CF(0) - the membrane proton channel. CF(1) has five subunits: alpha(3), beta(3), gamma(1), delta(1), epsilon(1). CF(0) has three main subunits: a, b and c.

The protein resides in the cell inner membrane. In terms of biological role, produces ATP from ADP in the presence of a proton gradient across the membrane. The gamma chain is believed to be important in regulating ATPase activity and the flow of protons through the CF(0) complex. In Francisella tularensis subsp. tularensis (strain FSC 198), this protein is ATP synthase gamma chain.